The chain runs to 130 residues: Small ribosomal subunit protein uS9 (130 aa).

Residues 101-110 are compositionally biased toward basic and acidic residues; sequence AGFLTRDPRM. A disordered region spans residues 101-130; it reads AGFLTRDPRMKERKKYGLKKARRAPQFSKR. Residues 111–130 are compositionally biased toward basic residues; that stretch reads KERKKYGLKKARRAPQFSKR.

This sequence belongs to the universal ribosomal protein uS9 family.

The protein is Small ribosomal subunit protein uS9 of Clostridium tetani (strain Massachusetts / E88).